Consider the following 62-residue polypeptide: Large ribosomal subunit protein uL30 (62 aa).

This sequence belongs to the universal ribosomal protein uL30 family. Part of the 50S ribosomal subunit.

The chain is Large ribosomal subunit protein uL30 from Kosmotoga olearia (strain ATCC BAA-1733 / DSM 21960 / TBF 19.5.1).